A 105-amino-acid polypeptide reads, in one-letter code: Class II hydrophobin 1 (105 aa).

The signal sequence occupies residues 1–15; sequence MQVLLIATLVASVLA. 4 disulfide bridges follow: Cys-38–Cys-87, Cys-48–Cys-78, Cys-49–Cys-58, and Cys-88–Cys-99.

It belongs to the cerato-ulmin hydrophobin family. Homotetramer. Further self-assembles to form highly ordered films at water-air interfaces through intermolecular interactions.

Its subcellular location is the secreted. It is found in the cell wall. Its function is as follows. Aerial growth, conidiation, and dispersal of filamentous fungi in the environment rely upon a capability of their secreting small amphipathic proteins called hydrophobins (HPBs) with low sequence identity. Class I can self-assemble into an outermost layer of rodlet bundles on aerial cell surfaces, conferring cellular hydrophobicity that supports fungal growth, development and dispersal; whereas Class II form highly ordered films at water-air interfaces through intermolecular interactions but contribute nothing to the rodlet structure. HYD1 is a class II hydrophobin that plays roles in conidiation and cuticle-bypassing infection by regulating the transcripts of frequency clock protein frq, and velvet protein vosA, as well as primordium formation via the mitogen-activated protein kinase signaling pathway. Also participates in stress response, including tolerance of mycelia to osmotic and oxidative stresses, and conidia to high or low temperature. Acts as a defensive factor against Calcarisporium cordycipiticola infection, probably via the formation of a physical barrier to inhibit the pathogen infection owing to its hydrophobicity or binding to the effector of C.cordycipiticola, hindering the recognition of the pathogen. Finally, regulates the transcription of the AreA transcription factor at different developmental stages via a positive feedback loop. This chain is Class II hydrophobin 1, found in Cordyceps militaris (Caterpillar fungus).